The primary structure comprises 277 residues: Small ribosomal subunit protein uS2 (277 aa).

Over residues 228-241 (YEERLQAETDKDAE) the composition is skewed to basic and acidic residues. Positions 228–277 (YEERLQAETDKDAESSTVQQEENPEADIPESIETKESVSAAADSDLDENE) are disordered.

The protein belongs to the universal ribosomal protein uS2 family.

In Syntrophus aciditrophicus (strain SB), this protein is Small ribosomal subunit protein uS2.